Reading from the N-terminus, the 155-residue chain is Ribosome maturation factor RimP (155 aa).

It belongs to the RimP family.

The protein localises to the cytoplasm. Required for maturation of 30S ribosomal subunits. The polypeptide is Ribosome maturation factor RimP (Salinibacter ruber (strain DSM 13855 / M31)).